The following is a 583-amino-acid chain: Aspartate--tRNA ligase (583 aa).

Glutamate 174 lines the L-aspartate pocket. The segment at 198-201 (QITK) is aspartate. Arginine 220 provides a ligand contact to L-aspartate. ATP-binding positions include 220-222 (RDE) and glutamine 229. Histidine 443 lines the L-aspartate pocket. Residue glutamate 477 participates in ATP binding. Residue arginine 484 participates in L-aspartate binding. 529–532 (GLDR) contributes to the ATP binding site.

The protein belongs to the class-II aminoacyl-tRNA synthetase family. Type 1 subfamily. Homodimer.

The protein localises to the cytoplasm. The catalysed reaction is tRNA(Asp) + L-aspartate + ATP = L-aspartyl-tRNA(Asp) + AMP + diphosphate. Functionally, catalyzes the attachment of L-aspartate to tRNA(Asp) in a two-step reaction: L-aspartate is first activated by ATP to form Asp-AMP and then transferred to the acceptor end of tRNA(Asp). The polypeptide is Aspartate--tRNA ligase (Streptococcus agalactiae serotype V (strain ATCC BAA-611 / 2603 V/R)).